Here is a 304-residue protein sequence, read N- to C-terminus: 1D-myo-inositol 2-acetamido-2-deoxy-alpha-D-glucopyranoside deacetylase 2 (304 aa).

Zn(2+) contacts are provided by histidine 17, aspartate 20, and histidine 152.

Belongs to the MshB deacetylase family. Zn(2+) is required as a cofactor.

It catalyses the reaction 1D-myo-inositol 2-acetamido-2-deoxy-alpha-D-glucopyranoside + H2O = 1D-myo-inositol 2-amino-2-deoxy-alpha-D-glucopyranoside + acetate. In terms of biological role, catalyzes the deacetylation of 1D-myo-inositol 2-acetamido-2-deoxy-alpha-D-glucopyranoside (GlcNAc-Ins) in the mycothiol biosynthesis pathway. The polypeptide is 1D-myo-inositol 2-acetamido-2-deoxy-alpha-D-glucopyranoside deacetylase 2 (Catenulispora acidiphila (strain DSM 44928 / JCM 14897 / NBRC 102108 / NRRL B-24433 / ID139908)).